Reading from the N-terminus, the 258-residue chain is Thiamine thiazole synthase (258 aa).

NAD(+)-binding positions include Ala36, 55–56, Gly63, Val127, and 154–156; these read EK and HVD. Fe cation is bound by residues Asp156 and His171. Position 224 (Met224) interacts with NAD(+). Glycine is bound at residue Arg234.

Belongs to the THI4 family. In terms of assembly, homooctamer; tetramer of dimers. Fe(2+) serves as cofactor.

It carries out the reaction hydrogen sulfide + glycine + NAD(+) = ADP-5-ethyl-4-methylthiazole-2-carboxylate + nicotinamide + 3 H2O + H(+). It participates in cofactor biosynthesis; thiamine diphosphate biosynthesis. Functionally, involved in the biosynthesis of the thiazole moiety of thiamine. Catalyzes the conversion of NAD and glycine to adenosine diphosphate 5-(2-hydroxyethyl)-4-methylthiazole-2-carboxylate (ADT), an adenylated thiazole intermediate, using free sulfide as a source of sulfur. The protein is Thiamine thiazole synthase of Methanococcoides burtonii (strain DSM 6242 / NBRC 107633 / OCM 468 / ACE-M).